The sequence spans 530 residues: uncharacterized protein (530 aa).

Residues 485–529 (SKEENREIKLSIRENKEKQRKKSVEKSVSKLQNQLNRLLNKNTIE) are a coiled coil.

This is an uncharacterized protein from Acanthamoeba polyphaga (Amoeba).